The following is a 59-amino-acid chain: Conorfamide-Vc1 (59 aa).

Positions Met-1–Ala-19 are cleaved as a signal peptide. Positions Thr-20–Lys-25 are excised as a propeptide. Positions Ala-32–Arg-39 are positively charged region crucial for activity against MRGPRX1 receptors. A Phenylalanine amide modification is found at Phe-43. Positions Arg-45–Leu-59 are excised as a propeptide.

This sequence belongs to the FARP (FMRFamide related peptide) family. Expressed by the venom duct.

It is found in the secreted. In terms of biological role, this peptide activates human and mouse sensory neuron-specific G-protein coupled receptors MRGPRX1. The activity on human receptors has been measured (EC(50)=1.8 uM). Compared with the agonist chloroquine (anti-malaria drug), it is 200-fold more potent. The peptide also causes an increase in cytosolic calcium in a specific subset of DRG neurons, and, in contrast to other Conus venom peptides, the peptide also affects a large fraction of the non-neuronal cells. In vivo, when intracranially injected into mice, it principally renders mice unable to move, and at very low doses, it causes hyperactivity. It also induces itch sensation, since intradermal cheek injection into humanized transgenic mouse (mouse MRGPRX1 replaced by human MRGPRX1) induces scratching. In vivo, when tested at high doses (10 uM) on zebrafish larvae, it induces a range of behavioral effects ranging from an early hypoactivity during the first hour of treatment to an increase in movement during the following hours when the larvae are submitted to strobe light phases. The protein is Conorfamide-Vc1 of Conus victoriae (Queen Victoria cone).